We begin with the raw amino-acid sequence, 510 residues long: tRNA-2-methylthio-N(6)-dimethylallyladenosine synthase (510 aa).

Residues M1 to G25 form a disordered region. The region spanning R34–H154 is the MTTase N-terminal domain. [4Fe-4S] cluster-binding residues include C43, C79, C117, C195, C199, and C202. A Radical SAM core domain is found at A181–A414. The 63-residue stretch at K417–A479 folds into the TRAM domain. Residues Q484 to A493 are compositionally biased toward polar residues. Residues Q484 to V510 are disordered.

The protein belongs to the methylthiotransferase family. MiaB subfamily. Monomer. The cofactor is [4Fe-4S] cluster.

The protein resides in the cytoplasm. It catalyses the reaction N(6)-dimethylallyladenosine(37) in tRNA + (sulfur carrier)-SH + AH2 + 2 S-adenosyl-L-methionine = 2-methylsulfanyl-N(6)-dimethylallyladenosine(37) in tRNA + (sulfur carrier)-H + 5'-deoxyadenosine + L-methionine + A + S-adenosyl-L-homocysteine + 2 H(+). Functionally, catalyzes the methylthiolation of N6-(dimethylallyl)adenosine (i(6)A), leading to the formation of 2-methylthio-N6-(dimethylallyl)adenosine (ms(2)i(6)A) at position 37 in tRNAs that read codons beginning with uridine. This Beijerinckia indica subsp. indica (strain ATCC 9039 / DSM 1715 / NCIMB 8712) protein is tRNA-2-methylthio-N(6)-dimethylallyladenosine synthase.